Consider the following 142-residue polypeptide: Hemoglobin subunit alpha-A (142 aa).

In terms of domain architecture, Globin spans 2-142 (VLTAGDKANV…VATALTSKYR (141 aa)). The heme b site is built by His59 and His88.

It belongs to the globin family. As to quaternary structure, heterotetramer of two alpha-A chains and two beta chains. Red blood cells.

Functionally, involved in oxygen transport from the lung to the various peripheral tissues. The chain is Hemoglobin subunit alpha-A from Chelonoidis niger (Galapagos giant tortoise).